Here is a 310-residue protein sequence, read N- to C-terminus: MKKNNYKIVSLYSFFSFQENSIIELKQNLLRIEKENDLSGLLIIASEGINGTICAEEKIIENILNLIKNIVGNNQLNIKVSYSKEKIFKKLKLKIKNEIVTMGVPEINPLEDAGTYIDSFNWNKLIKDKDTIVIDTRNHYEVSIGSFKKSINPNTKNFSEFPQWVDNNLDNHLGNENSKNIAMFCTGGIRCEKATTLLKNKGYKNIFHLKGGILKYLEDISKEESLFEGECFVFDKRVALDHELKKGSYSICHACGMPISIEDQTKVEYIEGIQCHFCINKFTDEDRKRFEERQKQINKLKVKNQEISNN.

One can recognise a Rhodanese domain in the interval 127–225 (KDKDTIVIDT…YLEDISKEES (99 aa)). Cys-185 (cysteine persulfide intermediate) is an active-site residue.

Belongs to the TrhO family.

The catalysed reaction is uridine(34) in tRNA + AH2 + O2 = 5-hydroxyuridine(34) in tRNA + A + H2O. Its function is as follows. Catalyzes oxygen-dependent 5-hydroxyuridine (ho5U) modification at position 34 in tRNAs. The sequence is that of tRNA uridine(34) hydroxylase from Prochlorococcus marinus (strain MIT 9515).